The primary structure comprises 375 residues: Chaperone protein DnaJ 1 (375 aa).

In terms of domain architecture, J spans Asp4–Gly68. The CR-type zinc finger occupies Gly127–Gln209. The Zn(2+) site is built by Cys140, Cys143, Cys157, Cys160, Cys183, Cys186, Cys197, and Cys200. CXXCXGXG motif repeat units follow at residues Cys140–Gly147, Cys157–Gly164, Cys183–Gly190, and Cys197–Gly204.

Belongs to the DnaJ family. In terms of assembly, homodimer. It depends on Zn(2+) as a cofactor.

The protein resides in the cytoplasm. Its function is as follows. Participates actively in the response to hyperosmotic and heat shock by preventing the aggregation of stress-denatured proteins and by disaggregating proteins, also in an autonomous, DnaK-independent fashion. Unfolded proteins bind initially to DnaJ; upon interaction with the DnaJ-bound protein, DnaK hydrolyzes its bound ATP, resulting in the formation of a stable complex. GrpE releases ADP from DnaK; ATP binding to DnaK triggers the release of the substrate protein, thus completing the reaction cycle. Several rounds of ATP-dependent interactions between DnaJ, DnaK and GrpE are required for fully efficient folding. Also involved, together with DnaK and GrpE, in the DNA replication of plasmids through activation of initiation proteins. This chain is Chaperone protein DnaJ 1, found in Corynebacterium diphtheriae (strain ATCC 700971 / NCTC 13129 / Biotype gravis).